The chain runs to 412 residues: Maltoporin (412 aa).

The signal sequence occupies residues 1–22; that stretch reads MKKVSVIAAAVAATLAAGSAFA.

Belongs to the porin LamB (TC 1.B.3) family. In terms of assembly, homotrimer formed of three 18-stranded antiparallel beta-barrels, containing three independent channels.

The protein localises to the cell outer membrane. The catalysed reaction is beta-maltose(in) = beta-maltose(out). Functionally, involved in the transport of maltose and maltodextrins. The chain is Maltoporin from Vibrio cholerae serotype O1 (strain ATCC 39315 / El Tor Inaba N16961).